Here is a 273-residue protein sequence, read N- to C-terminus: 2,3,4,5-tetrahydropyridine-2,6-dicarboxylate N-succinyltransferase (273 aa).

Residues R104 and D141 each contribute to the substrate site.

The protein belongs to the transferase hexapeptide repeat family. As to quaternary structure, homotrimer.

Its subcellular location is the cytoplasm. It catalyses the reaction (S)-2,3,4,5-tetrahydrodipicolinate + succinyl-CoA + H2O = (S)-2-succinylamino-6-oxoheptanedioate + CoA. The protein operates within amino-acid biosynthesis; L-lysine biosynthesis via DAP pathway; LL-2,6-diaminopimelate from (S)-tetrahydrodipicolinate (succinylase route): step 1/3. This Azoarcus sp. (strain BH72) protein is 2,3,4,5-tetrahydropyridine-2,6-dicarboxylate N-succinyltransferase.